A 61-amino-acid polypeptide reads, in one-letter code: Lens epithelial cell protein LEP503 (61 aa).

In Mus musculus (Mouse), this protein is Lens epithelial cell protein LEP503 (Lenep).